Reading from the N-terminus, the 494-residue chain is DnaJ homolog subfamily C member 7 (494 aa).

An N-acetylalanine modification is found at alanine 2. TPR repeat units follow at residues 28–61 (AETF…CPKN), 62–95 (ASYY…DDSF), 96–129 (VRGH…DHKN), 142–175 (VMEY…APAC), 177–209 (RFKI…DSTN), 210–243 (ADAL…APDH), 256–289 (LKAK…DPNN), 294–327 (AKLY…DDTY), and 328–361 (IKAY…EKTK). The 71-residue stretch at 381–451 (DYYKILGVDK…KKKTRYDSGQ (71 aa)) folds into the J domain. Serine 393 bears the Phosphoserine mark.

In terms of assembly, associates with complexes containing chaperones HSP70 and HSP90. Interacts with the GAP domain of NF1. Interacts with HSP90AA1. Interacts with HSPA1A/B; the interaction is enhanced by ATP. Interacts with HSP90AB1. Interacts with PGR. Interacts with RAD9A; the interaction is interrupted by UV and heat shock treatments. Interacts with HUS1 and RAD1. Interacts with NR1I3. The DNAJC7-NR1I3 complex may also include HSP90. Interacts with HSPA8.

The protein resides in the cytoplasm. The protein localises to the nucleus. Its subcellular location is the cytoskeleton. In terms of biological role, acts as a co-chaperone regulating the molecular chaperones HSP70 and HSP90 in folding of steroid receptors, such as the glucocorticoid receptor and the progesterone receptor. Proposed to act as a recycling chaperone by facilitating the return of chaperone substrates to early stages of chaperoning if further folding is required. In vitro, induces ATP-independent dissociation of HSP90 but not of HSP70 from the chaperone-substrate complexes. Recruits NR1I3 to the cytoplasm. This chain is DnaJ homolog subfamily C member 7 (DNAJC7), found in Homo sapiens (Human).